The sequence spans 216 residues: V-type ATP synthase subunit D (216 aa).

It belongs to the V-ATPase D subunit family.

In terms of biological role, produces ATP from ADP in the presence of a proton gradient across the membrane. In Clostridium novyi (strain NT), this protein is V-type ATP synthase subunit D.